Consider the following 494-residue polypeptide: tRNA-2-methylthio-N(6)-dimethylallyladenosine synthase (494 aa).

Positions Arg-5–Val-121 constitute an MTTase N-terminal domain. [4Fe-4S] cluster is bound by residues Cys-14, Cys-50, Cys-84, Cys-158, Cys-162, and Cys-165. The Radical SAM core domain occupies Arg-144 to Glu-374. The TRAM domain maps to Ala-377–Ile-446. Positions Trp-458 to Pro-468 are enriched in basic and acidic residues. A disordered region spans residues Trp-458 to Ser-494.

Belongs to the methylthiotransferase family. MiaB subfamily. In terms of assembly, monomer. It depends on [4Fe-4S] cluster as a cofactor.

The protein resides in the cytoplasm. The catalysed reaction is N(6)-dimethylallyladenosine(37) in tRNA + (sulfur carrier)-SH + AH2 + 2 S-adenosyl-L-methionine = 2-methylsulfanyl-N(6)-dimethylallyladenosine(37) in tRNA + (sulfur carrier)-H + 5'-deoxyadenosine + L-methionine + A + S-adenosyl-L-homocysteine + 2 H(+). Functionally, catalyzes the methylthiolation of N6-(dimethylallyl)adenosine (i(6)A), leading to the formation of 2-methylthio-N6-(dimethylallyl)adenosine (ms(2)i(6)A) at position 37 in tRNAs that read codons beginning with uridine. The polypeptide is tRNA-2-methylthio-N(6)-dimethylallyladenosine synthase (Thermobifida fusca (strain YX)).